Consider the following 495-residue polypeptide: Maternal protein exuperantia-1 (495 aa).

Disordered regions lie at residues 197–217 (DESANKENEPENVNRNGSSND) and 377–495 (TIKP…AATN). Polar residues-rich tracts occupy residues 207 to 216 (ENVNRNGSSN) and 398 to 414 (AASSKNGAMSSRSTSTE).

In terms of biological role, ensures the proper localization of the mRNA of the bicoid gene to the anterior regions of the oocyte thus playing a fundamental role in the establishment of the polarity of the oocyte. May bind the bcd mRNA. The sequence is that of Maternal protein exuperantia-1 (exu1) from Drosophila pseudoobscura pseudoobscura (Fruit fly).